The sequence spans 534 residues: NAD(P)H-quinone oxidoreductase chain 4 2 (534 aa).

14 helical membrane passes run 9 to 29 (FPWLTTVIAYPVLAALFIPLI), 51 to 71 (WFALFIAVTDLLILLAGFYVG), 106 to 126 (LILLTAFITTLAILAAWPVTL), 130 to 150 (LFYFLMLAMYGGQIGVFAVQD), 152 to 172 (LLFFLMWELELIPVYLLLSIW), 184 to 204 (FILYTALSSLFILVAGLAMAF), 227 to 247 (LLMYGAFLIAYGVKLPIFPLH), 258 to 278 (TAPVHMLLAGILLKMGGYALM), 290 to 310 (LYFAPVLIVLGVVNIIFAALT), 326 to 346 (ISHMGFVLIGIGSLTEIGMSG), 347 to 367 (AMLQMISHGLIGASLFFLVGA), 399 to 419 (LASLALPGMSGFVAEIMVFIG), 432 to 452 (LVVVFLAAVGVILTPIYLLSM), and 479 to 499 (VFIIACLLIPIIGIGLYPKLV).

Belongs to the complex I subunit 4 family.

It localises to the cellular thylakoid membrane. It carries out the reaction a plastoquinone + NADH + (n+1) H(+)(in) = a plastoquinol + NAD(+) + n H(+)(out). The enzyme catalyses a plastoquinone + NADPH + (n+1) H(+)(in) = a plastoquinol + NADP(+) + n H(+)(out). In terms of biological role, NDH-1 shuttles electrons from NAD(P)H, via FMN and iron-sulfur (Fe-S) centers, to quinones in the respiratory chain. The immediate electron acceptor for the enzyme in this species is believed to be plastoquinone. Couples the redox reaction to proton translocation (for every two electrons transferred, four hydrogen ions are translocated across the cytoplasmic membrane), and thus conserves the redox energy in a proton gradient. This chain is NAD(P)H-quinone oxidoreductase chain 4 2, found in Synechococcus sp. (strain JA-2-3B'a(2-13)) (Cyanobacteria bacterium Yellowstone B-Prime).